Here is a 260-residue protein sequence, read N- to C-terminus: Flap endonuclease Xni (260 aa).

Asp105 is a Mg(2+) binding site. Residues 164–259 form the 5'-3' exonuclease domain; the sequence is NQFLDLMALA…VNGPANTQQA (96 aa). Residues Leu172, Ala173, Pro181, Ile183, and Ile186 each contribute to the K(+) site. An interaction with DNA region spans residues 185-190; it reads GIGPKS.

This sequence belongs to the Xni family. Mg(2+) serves as cofactor. The cofactor is K(+).

Has flap endonuclease activity. During DNA replication, flap endonucleases cleave the 5'-overhanging flap structure that is generated by displacement synthesis when DNA polymerase encounters the 5'-end of a downstream Okazaki fragment. The protein is Flap endonuclease Xni of Shewanella sp. (strain MR-4).